The primary structure comprises 170 residues: Urease accessory protein UreE (170 aa).

The interval 144-170 is disordered; that stretch reads GGHSHDDHDHHHGHHEHDHEHHHHHHD. Residues 146-162 show a composition bias toward basic and acidic residues; sequence HSHDDHDHHHGHHEHDH.

It belongs to the UreE family.

It localises to the cytoplasm. Functionally, involved in urease metallocenter assembly. Binds nickel. Probably functions as a nickel donor during metallocenter assembly. In Brucella anthropi (strain ATCC 49188 / DSM 6882 / CCUG 24695 / JCM 21032 / LMG 3331 / NBRC 15819 / NCTC 12168 / Alc 37) (Ochrobactrum anthropi), this protein is Urease accessory protein UreE.